Reading from the N-terminus, the 397-residue chain is Lysophospholipid transporter LplT (397 aa).

Residues 1–17 (MSESVHTNTSLWSKGMK) lie on the Periplasmic side of the membrane. Residues 18–38 (AVIVAQFLSAFGDNALLFATL) form a helical membrane-spanning segment. Residues 39 to 52 (ALLKAQFYPEWSQP) are Cytoplasmic-facing. The chain crosses the membrane as a helical span at residues 53–73 (ILQMVFVGAYILFAPFVGQVA). Topologically, residues 74-90 (DSFAKGRVMMFANGLKL) are periplasmic. Residues 91 to 111 (LGAASICFGINPFLGYTLVGV) form a helical membrane-spanning segment. Over 112–144 (GAAAYSPAKYGILGELTTGSKLVKANGLMEAST) the chain is Cytoplasmic. A helical transmembrane segment spans residues 145 to 165 (IAAILLGSVAGGVLADWHILV). Position 166 (Ala-166) is a topological domain, periplasmic. The chain crosses the membrane as a helical span at residues 167–187 (LVACALAYGGAVVANIYIPKL). Topologically, residues 188-226 (AAARPGQSWNLISMTRSFLNACTSLWRNGETRFSLVGTS) are cytoplasmic. The helical transmembrane segment at 227 to 247 (LFWGAGVTLRFLLVLWVPVAL) threads the bilayer. The Periplasmic portion of the chain corresponds to 248 to 256 (GITDNATPT). A helical transmembrane segment spans residues 257-277 (YLNAMVAIGIVVGAGAAAKLV). Topologically, residues 278–280 (TLE) are cytoplasmic. Residues 281 to 301 (TVSRCMPAGILIGVVVLIFSL) traverse the membrane as a helical segment. At 302–304 (QHE) the chain is on the periplasmic side. The helical transmembrane segment at 305–325 (LLPAYALLMLIGVLGGFFVVP) threads the bilayer. The Cytoplasmic portion of the chain corresponds to 326 to 343 (LNALLQERGKKSVGAGNA). A helical membrane pass occupies residues 344-364 (IAVQNLGENSAMLLMLGIYSL). The Periplasmic segment spans residues 365-366 (AV). A helical transmembrane segment spans residues 367–387 (MVGIPVVPIGIGFGALFALAI). The Cytoplasmic portion of the chain corresponds to 388–397 (TALWIWQRRH).

It belongs to the major facilitator superfamily. LplT (TC 2.A.1.42) family.

Its subcellular location is the cell inner membrane. Catalyzes the facilitated diffusion of 2-acyl-glycero-3-phosphoethanolamine (2-acyl-GPE) into the cell. This is Lysophospholipid transporter LplT from Escherichia coli O81 (strain ED1a).